The following is a 144-amino-acid chain: Protein BUD31 homolog (144 aa).

The Nuclear localization signal signature appears at 2–10 (PKVRRSRKP).

It belongs to the BUD31 (G10) family.

It is found in the nucleus. This chain is Protein BUD31 homolog, found in Branchiostoma belcheri (Amphioxus).